The chain runs to 419 residues: MFIDKVNTYLAAGRGGDGCISFRREKYVPYGGPDGGNGGNGGDIYFESDQHKTTLLDLSYRPKFKAEDGQKGSSGDKSGRYGEDLIIKIPLGTLIFKNGEFFADLKTVGERILIVKGGRGGRGNASFKTGRHTVPRIAEKGAPGETAEVNLELRLIADVGLLGLPNAGKSTLLSQISAAKPKIADYPFTTLAPNLGVVNYKGKHFTAADIPGIIEGAYKGIGLGFEFLRHIRRTKVLIHVIDVNGFDGRDPYENYKIINNELKKYSKHLAKKHVIIVLNKIDSAVSLEQIKNFKKHLKVKKLFETSAATGYGIDALLKEMLRMLEKPVAFSTEGEVEPLHVKKYIYEPEFKISIENGIFVATGAKVETLTEVTKFNEDESLRRYRNILKKMGLEIELKKMGARPGDTVRIGDFEFTFEK.

The Obg domain maps to 1 to 156; it reads MFIDKVNTYL…AEVNLELRLI (156 aa). Positions 157 to 325 constitute an OBG-type G domain; it reads ADVGLLGLPN…LLKEMLRMLE (169 aa). GTP is bound by residues 163–170, 188–192, 209–212, 279–282, and 306–308; these read GLPNAGKS, FTTLA, DIPG, NKID, and SAA. Residues Ser170 and Thr190 each coordinate Mg(2+). An OCT domain is found at 342-419; it reads KKYIYEPEFK…IGDFEFTFEK (78 aa).

It belongs to the TRAFAC class OBG-HflX-like GTPase superfamily. OBG GTPase family. In terms of assembly, monomer. Mg(2+) serves as cofactor.

The protein resides in the cytoplasm. In terms of biological role, an essential GTPase which binds GTP, GDP and possibly (p)ppGpp with moderate affinity, with high nucleotide exchange rates and a fairly low GTP hydrolysis rate. Plays a role in control of the cell cycle, stress response, ribosome biogenesis and in those bacteria that undergo differentiation, in morphogenesis control. This is GTPase Obg from Endomicrobium trichonymphae.